The primary structure comprises 516 residues: Leucine-rich repeat transmembrane neuronal protein 2 (516 aa).

The first 33 residues, 1-33, serve as a signal peptide directing secretion; it reads MGLHFKWPLGAPMLAAIYAMSMVLKMLPALGMA. Residues 34–61 form the LRRNT domain; the sequence is CPPKCRCEKLLFYCDSQGFHSVPNATDK. Topologically, residues 34-422 are extracellular; that stretch reads CPPKCRCEKL…EPDNAIFTQR (389 aa). N-linked (GlcNAc...) asparagine glycosylation occurs at N57. LRR repeat units follow at residues 63–83, 86–107, 110–131, 134–155, 158–179, 182–203, 206–227, 230–251, 254–275, and 278–299; these read SLGL…QFAS, QLTW…AFQG, KLKE…TFTQ, NLQN…LFYG, KLQT…LFWD, SLEF…GFAG, KLRE…HFLR, SLHT…MEWT, TLEK…VFET, and NLKI…ILNS. N-linked (GlcNAc...) asparagine glycosylation is present at N126. The N-linked (GlcNAc...) asparagine glycan is linked to N243. The LRRCT domain maps to 311–362; that stretch reads NLWECSARICALASWLGSFQGRWEHSILCHSPDHTQGEDILDAVHGFQLCWN. N362 is a glycosylation site (N-linked (GlcNAc...) asparagine). The helical transmembrane segment at 423-443 threads the bilayer; it reads VITGTMALLFSFFFIIFIVFI. At 444-516 the chain is on the cytoplasmic side; that stretch reads SRKCCPPTLR…QQLPYKECEV (73 aa). Residues 513–516 carry the Involved in DLG4-binding motif; that stretch reads ECEV.

The protein belongs to the LRRTM family. Interacts with DLG4. Interacts with neurexin NRXN1; interaction is mediated by heparan sulfate glycan modification on neurexin. In terms of tissue distribution, expressed in neuronal tissues.

It is found in the cell membrane. The protein localises to the postsynaptic cell membrane. Involved in the development and maintenance of excitatory synapses in the vertebrate nervous system. Regulates surface expression of AMPA receptors and instructs the development of functional glutamate release sites. Acts as a ligand for the presynaptic receptors NRXN1-A and NRXN1-B. The polypeptide is Leucine-rich repeat transmembrane neuronal protein 2 (LRRTM2) (Homo sapiens (Human)).